Reading from the N-terminus, the 1465-residue chain is DNA polymerase III PolC-type (1465 aa).

Residues 427–583 enclose the Exonuclease domain; the sequence is YVVFDVETTG…YDAEATGRLL (157 aa).

This sequence belongs to the DNA polymerase type-C family. PolC subfamily.

It is found in the cytoplasm. The catalysed reaction is DNA(n) + a 2'-deoxyribonucleoside 5'-triphosphate = DNA(n+1) + diphosphate. Its function is as follows. Required for replicative DNA synthesis. This DNA polymerase also exhibits 3' to 5' exonuclease activity. This is DNA polymerase III PolC-type from Streptococcus pyogenes serotype M2 (strain MGAS10270).